The following is a 316-amino-acid chain: 1-aminocyclopropane-1-carboxylate oxidase 4 (316 aa).

A Fe2OG dioxygenase domain is found at 153-253 (PNFGTKVSNY…RMSLASFYNP (101 aa)). Residues His177, Asp179, and His234 each contribute to the Fe cation site.

The protein belongs to the iron/ascorbate-dependent oxidoreductase family. The cofactor is Fe cation. Expressed in all of the floral organs examined apart from the sepals.

It carries out the reaction 1-aminocyclopropane-1-carboxylate + L-ascorbate + O2 = ethene + L-dehydroascorbate + hydrogen cyanide + CO2 + 2 H2O. It functions in the pathway alkene biosynthesis; ethylene biosynthesis via S-adenosyl-L-methionine; ethylene from S-adenosyl-L-methionine: step 2/2. The sequence is that of 1-aminocyclopropane-1-carboxylate oxidase 4 (ACO4) from Solanum lycopersicum (Tomato).